Reading from the N-terminus, the 162-residue chain is Nucleotide-binding protein SGR_2909 (162 aa).

The protein belongs to the YajQ family.

Nucleotide-binding protein. The chain is Nucleotide-binding protein SGR_2909 from Streptomyces griseus subsp. griseus (strain JCM 4626 / CBS 651.72 / NBRC 13350 / KCC S-0626 / ISP 5235).